A 315-amino-acid polypeptide reads, in one-letter code: Protein sprouty homolog 2 (315 aa).

Residues 1–15 (MEARAQSGNGSQPLL) show a composition bias toward polar residues. The interval 1-140 (MEARAQSGNG…SEQRLLGSSF (140 aa)) is disordered. Basic and acidic residues predominate over residues 20 to 32 (DGGRPRGEPDPRD). Over residues 108–140 (SRSISTVSSGSRSSTRTSTSSSSSEQRLLGSSF) the composition is skewed to low complexity. A required for interaction with CAV1 region spans residues 118–315 (SRSSTRTSTS…VPRRNFEKPT (198 aa)). The 115-residue stretch at 177 to 291 (RCEDCGKCKC…CYDRVNRPGC (115 aa)) folds into the SPR domain. Positions 178-315 (CEDCGKCKCK…VPRRNFEKPT (138 aa)) are required for interaction with TESK1.

Belongs to the sprouty family. In terms of assembly, forms heterodimers with SPRY1. Forms a tripartite complex containing GAB1, METTL13 and SPRY2. Within the complex interacts with METTL13. Interacts with RAF1. Interacts (via C-terminus) with TESK1 (via C-terminus); the interaction disrupts SPRY2 interaction with GRB2, potentially via disruption of SPRY2 serine dephosphorylation. Interacts with PPP2R1A/PP2A-A and PPP2CA/PP2A-C; the interaction with PPP2CA/PP2A-C is inhibited by interaction with TESK1, possibly by vesicular sequestration of SPRY2. Inhibition of the interaction with the serine/threonine-protein phosphatase 2A (PP2A) holoenzyme results in loss of PP2A-mediated dephosphorylation, resulting in the loss of SPRY2 interaction with GRB2. Interacts with GRB2. Interacts with CBL/C-CBL; the interaction inhibits CBL-mediated ubiquitination of EGFR. Interacts (via C-terminus) with CAV1 (via C-terminus). Post-translationally, cleaved at Pro-144 by the prolyl endopeptidase FAP (seprase) activity (in vitro).

It is found in the cytoplasm. Its subcellular location is the cytoskeleton. The protein resides in the cell projection. The protein localises to the ruffle membrane. Its function is as follows. Antagonist of fibroblast growth factor (FGF) pathways via inhibition of FGF-mediated phosphorylation of ERK1/2. Thereby acts as an antagonist of FGF-induced retinal lens fiber differentiation, may inhibit limb bud outgrowth and may negatively modulate respiratory organogenesis. Inhibits TGFB-induced epithelial-to-mesenchymal transition in retinal lens epithelial cells. Inhibits CBL/C-CBL-mediated EGFR ubiquitination. The sequence is that of Protein sprouty homolog 2 (SPRY2) from Pongo abelii (Sumatran orangutan).